The sequence spans 256 residues: Acidic leucine-rich nuclear phosphoprotein 32 family member E (256 aa).

3 LRR repeats span residues 43-64, 65-87, and 89-110; these read ELEFLSMANVQLTSLAKLPTLS, KLRKLELSDNIISGGLEVLAERC, and NLTYLNLSGNKIKDLGTVEALQ. One can recognise an LRRCT domain in the interval 123 to 161; it reads CEITNLEDYRDSIFDLLQQITYLDGFDQEDNEAPDSEDD. Residues 147 to 256 form a disordered region; that stretch reads GFDQEDNEAP…PEDEGEEEDD (110 aa). 2 stretches are compositionally biased toward acidic residues: residues 148–205 and 215–235; these read FDQE…EEEV and IQDEDDDDDYVEEGGDEEEEA. A ZID domain region spans residues 204–256; sequence EVGLSYLMKEEIQDEDDDDDYVEEGGDEEEEAEGIRGEKRKRDPEDEGEEEDD. Positions 236–247 are enriched in basic and acidic residues; that stretch reads EGIRGEKRKRDP.

The protein belongs to the ANP32 family. As to quaternary structure, component of a SWR1-like complex. Interacts with H2A.Z/H2AZ1.

It is found in the cytoplasm. The protein resides in the nucleus. In terms of biological role, histone chaperone that specifically mediates the genome-wide removal of histone H2A.Z/H2AZ1 from the nucleosome: removes H2A.Z/H2AZ1 from its normal sites of deposition, especially from enhancer and insulator regions. Not involved in deposition of H2A.Z/H2AZ1 in the nucleosome. May stabilize the evicted H2A.Z/H2AZ1-H2B dimer, thus shifting the equilibrium towards dissociation and the off-chromatin state. Inhibits activity of protein phosphatase 2A (PP2A). Does not inhibit protein phosphatase 1. May play a role in cerebellar development and synaptogenesis. The protein is Acidic leucine-rich nuclear phosphoprotein 32 family member E (ANP32E) of Gallus gallus (Chicken).